A 157-amino-acid chain; its full sequence is MRIGIGIDVHQFAEGRKLIIGGVEVPSPIGLLGHSDADVLLHAISDALLGAAALGDIGKHFPDTSPDYKDADSMELLRHVCKLLEQEGYKPVNVDTMLLLEKPKIAPYIDQMRRNIARCLGLEINAVSVKATTNEKLGYVGRQEGACAHAVCLIENA.

A divalent metal cation contacts are provided by D8 and H10. Residues 8-10 (DVH) and 34-35 (HS) contribute to the 4-CDP-2-C-methyl-D-erythritol 2-phosphate site. H42 lines the a divalent metal cation pocket. 4-CDP-2-C-methyl-D-erythritol 2-phosphate-binding positions include 56 to 58 (DIG), 132 to 135 (TTNE), and R142.

Belongs to the IspF family. In terms of assembly, homotrimer. Requires a divalent metal cation as cofactor.

It catalyses the reaction 4-CDP-2-C-methyl-D-erythritol 2-phosphate = 2-C-methyl-D-erythritol 2,4-cyclic diphosphate + CMP. The protein operates within isoprenoid biosynthesis; isopentenyl diphosphate biosynthesis via DXP pathway; isopentenyl diphosphate from 1-deoxy-D-xylulose 5-phosphate: step 4/6. Functionally, involved in the biosynthesis of isopentenyl diphosphate (IPP) and dimethylallyl diphosphate (DMAPP), two major building blocks of isoprenoid compounds. Catalyzes the conversion of 4-diphosphocytidyl-2-C-methyl-D-erythritol 2-phosphate (CDP-ME2P) to 2-C-methyl-D-erythritol 2,4-cyclodiphosphate (ME-CPP) with a corresponding release of cytidine 5-monophosphate (CMP). This chain is 2-C-methyl-D-erythritol 2,4-cyclodiphosphate synthase, found in Chlorobaculum tepidum (strain ATCC 49652 / DSM 12025 / NBRC 103806 / TLS) (Chlorobium tepidum).